We begin with the raw amino-acid sequence, 560 residues long: Terminal uridylyltransferase Tailor (560 aa).

Residues 169 to 197 (EQHPKPNPNNQPVQPHPTHQTKQEKKQAQ) are disordered. The span at 176-188 (PNNQPVQPHPTHQ) shows a compositional bias: low complexity. Aspartate 278 and aspartate 280 together coordinate Mg(2+). Residues 455-522 (LRNFFAYFAK…VVQDPIQLNH (68 aa)) enclose the PAP-associated domain.

It depends on Mg(2+) as a cofactor.

The protein localises to the cytoplasm. The enzyme catalyses RNA(n) + UTP = RNA(n)-3'-uridine ribonucleotide + diphosphate. Functionally, uridylyltransferase which mediates terminal uridylation of miRNAs, leading to their degradation. Has high specificity for splicing-derived miRNAs (mirtrons) and other miRNA substrates containing a 3'-G terminal nucleotide. Appears to be a major suppressor of mirtron biogenesis. The polypeptide is Terminal uridylyltransferase Tailor (Drosophila melanogaster (Fruit fly)).